Reading from the N-terminus, the 218-residue chain is ATP phosphoribosyltransferase (218 aa).

It belongs to the ATP phosphoribosyltransferase family. Short subfamily. As to quaternary structure, heteromultimer composed of HisG and HisZ subunits.

The protein resides in the cytoplasm. The enzyme catalyses 1-(5-phospho-beta-D-ribosyl)-ATP + diphosphate = 5-phospho-alpha-D-ribose 1-diphosphate + ATP. It functions in the pathway amino-acid biosynthesis; L-histidine biosynthesis; L-histidine from 5-phospho-alpha-D-ribose 1-diphosphate: step 1/9. Catalyzes the condensation of ATP and 5-phosphoribose 1-diphosphate to form N'-(5'-phosphoribosyl)-ATP (PR-ATP). Has a crucial role in the pathway because the rate of histidine biosynthesis seems to be controlled primarily by regulation of HisG enzymatic activity. In Deinococcus radiodurans (strain ATCC 13939 / DSM 20539 / JCM 16871 / CCUG 27074 / LMG 4051 / NBRC 15346 / NCIMB 9279 / VKM B-1422 / R1), this protein is ATP phosphoribosyltransferase (hisG).